The primary structure comprises 140 residues: Mialostatin (140 aa).

The first 18 residues, 1 to 18 (MAFFKSAVFLVCVVLAAA), serve as a signal peptide directing secretion. 2 disulfides stabilise this stretch: Cys-90–Cys-103 and Cys-114–Cys-134.

Belongs to the cystatin family. In terms of tissue distribution, expressed in midgut (at protein level).

Its subcellular location is the secreted. Its function is as follows. Inhibitor of cysteine proteinases. Inhibits several endogenous midgut digestive cysteine proteases, such as cathepsin L1, L3, B and C, but not aspartic protease cathepsin D1 and cysteine protease legumain. Inhibits proteolysis of blood proteins catalyzed by tick gut cysteine cathepsins. Inhibits host cathepsin B (CSTB), C (CTSC), H (CTSH), K (CTSK), L (CTSL) and S (CTSS). This is Mialostatin from Ixodes ricinus (Common tick).